The following is a 201-amino-acid chain: GTP cyclohydrolase 1 (201 aa).

The interval 1-20 is disordered; the sequence is MDATVKKMSPETSRPSREEA. 3 residues coordinate Zn(2+): Cys-91, His-94, and Cys-162.

Belongs to the GTP cyclohydrolase I family. In terms of assembly, homomer.

It catalyses the reaction GTP + H2O = 7,8-dihydroneopterin 3'-triphosphate + formate + H(+). The protein operates within cofactor biosynthesis; 7,8-dihydroneopterin triphosphate biosynthesis; 7,8-dihydroneopterin triphosphate from GTP: step 1/1. The polypeptide is GTP cyclohydrolase 1 (Allorhizobium ampelinum (strain ATCC BAA-846 / DSM 112012 / S4) (Agrobacterium vitis (strain S4))).